The following is an 841-amino-acid chain: Probable alpha-glucuronidase A (841 aa).

An N-terminal signal peptide occupies residues 1 to 20 (MRGLNLFQLILALLLSMVAA). N-linked (GlcNAc...) asparagine glycans are attached at residues Asn51, Asn76, Asn85, Asn149, Asn222, Asn279, Asn310, Asn343, Asn450, Asn465, Asn527, Asn576, Asn682, Asn723, and Asn732.

Belongs to the glycosyl hydrolase 67 family.

The protein localises to the secreted. It catalyses the reaction an alpha-D-glucuronoside + H2O = D-glucuronate + an alcohol. In terms of biological role, alpha-glucuronidase involved in the hydrolysis of xylan, a major structural heterogeneous polysaccharide found in plant biomass representing the second most abundant polysaccharide in the biosphere, after cellulose. Releases 4-O-methylglucuronic acid from xylan. The polypeptide is Probable alpha-glucuronidase A (aguA) (Aspergillus niger (strain ATCC MYA-4892 / CBS 513.88 / FGSC A1513)).